We begin with the raw amino-acid sequence, 365 residues long: UDP-N-acetylglucosamine--N-acetylmuramyl-(pentapeptide) pyrophosphoryl-undecaprenol N-acetylglucosamine transferase (365 aa).

UDP-N-acetyl-alpha-D-glucosamine-binding positions include 10–12, asparagine 128, arginine 170, serine 199, isoleucine 250, and glutamine 295; that span reads TGG.

It belongs to the glycosyltransferase 28 family. MurG subfamily.

The protein localises to the cell inner membrane. The catalysed reaction is di-trans,octa-cis-undecaprenyl diphospho-N-acetyl-alpha-D-muramoyl-L-alanyl-D-glutamyl-meso-2,6-diaminopimeloyl-D-alanyl-D-alanine + UDP-N-acetyl-alpha-D-glucosamine = di-trans,octa-cis-undecaprenyl diphospho-[N-acetyl-alpha-D-glucosaminyl-(1-&gt;4)]-N-acetyl-alpha-D-muramoyl-L-alanyl-D-glutamyl-meso-2,6-diaminopimeloyl-D-alanyl-D-alanine + UDP + H(+). It participates in cell wall biogenesis; peptidoglycan biosynthesis. Functionally, cell wall formation. Catalyzes the transfer of a GlcNAc subunit on undecaprenyl-pyrophosphoryl-MurNAc-pentapeptide (lipid intermediate I) to form undecaprenyl-pyrophosphoryl-MurNAc-(pentapeptide)GlcNAc (lipid intermediate II). The protein is UDP-N-acetylglucosamine--N-acetylmuramyl-(pentapeptide) pyrophosphoryl-undecaprenol N-acetylglucosamine transferase of Chlorobium luteolum (strain DSM 273 / BCRC 81028 / 2530) (Pelodictyon luteolum).